Here is a 440-residue protein sequence, read N- to C-terminus: Ribosomal protein uS12 methylthiotransferase RimO (440 aa).

One can recognise an MTTase N-terminal domain in the interval 5-116 (PTIAISHLGC…IVNVIERAEQ (112 aa)). [4Fe-4S] cluster is bound by residues Cys-14, Cys-50, Cys-79, Cys-154, Cys-158, and Cys-161. The region spanning 140–370 (TTTEGVAYLR…ALQQPISWRK (231 aa)) is the Radical SAM core domain. Residues 372-438 (QQEVGKTVEV…EYDLFGQVVS (67 aa)) enclose the TRAM domain.

It belongs to the methylthiotransferase family. RimO subfamily. It depends on [4Fe-4S] cluster as a cofactor.

The protein localises to the cytoplasm. The enzyme catalyses L-aspartate(89)-[ribosomal protein uS12]-hydrogen + (sulfur carrier)-SH + AH2 + 2 S-adenosyl-L-methionine = 3-methylsulfanyl-L-aspartate(89)-[ribosomal protein uS12]-hydrogen + (sulfur carrier)-H + 5'-deoxyadenosine + L-methionine + A + S-adenosyl-L-homocysteine + 2 H(+). Functionally, catalyzes the methylthiolation of an aspartic acid residue of ribosomal protein uS12. This Trichormus variabilis (strain ATCC 29413 / PCC 7937) (Anabaena variabilis) protein is Ribosomal protein uS12 methylthiotransferase RimO.